The sequence spans 53 residues: Snake venom serine protease LmrSP-4 (53 aa).

The cysteines at positions 26 and 42 are disulfide-linked. The active-site Charge relay system is His41.

As to quaternary structure, monomer. N-glycosylated. As to expression, expressed by the venom gland.

Its subcellular location is the secreted. Inhibited by the small molecule serine protease inhibitors phenylmethylsulfonyl fluoride (PMSF) and benzamidine. Its function is as follows. Snake venom serine protease that has fibrinogenolytic activity. Hydrolyzes the alpha-chain of fibrinogen (FGA), without affecting the beta- and the gamma-chains. Also displays hydrolytic activity towards S-2302 (plasma kallikrein substrate) and S-2251 (substrate for plasmin), but has no hydrolytic activity with S-2238 (thrombin substrate) or S-2222 (factor Xa). This is Snake venom serine protease LmrSP-4 from Lachesis muta rhombeata (Bushmaster).